Here is a 310-residue protein sequence, read N- to C-terminus: Ribosomal RNA small subunit methyltransferase H (310 aa).

S-adenosyl-L-methionine is bound by residues 33–35, Asp-52, Phe-79, Asp-98, and Gln-105; that span reads GGH.

The protein belongs to the methyltransferase superfamily. RsmH family.

Its subcellular location is the cytoplasm. The catalysed reaction is cytidine(1402) in 16S rRNA + S-adenosyl-L-methionine = N(4)-methylcytidine(1402) in 16S rRNA + S-adenosyl-L-homocysteine + H(+). Functionally, specifically methylates the N4 position of cytidine in position 1402 (C1402) of 16S rRNA. This chain is Ribosomal RNA small subunit methyltransferase H, found in Campylobacter jejuni subsp. jejuni serotype O:23/36 (strain 81-176).